Consider the following 1397-residue polypeptide: Centlein (1397 aa).

2 disordered regions span residues methionine 1–glycine 43 and leucine 56–valine 76. Residue alanine 2 is modified to N-acetylalanine. Phosphoserine occurs at positions 5, 9, and 22. Coiled-coil stretches lie at residues glutamate 95–valine 126 and valine 405–alanine 481. Disordered stretches follow at residues leucine 422–alanine 449 and cysteine 485–leucine 521. The span at cysteine 485 to valine 503 shows a compositional bias: basic and acidic residues. Coiled coils occupy residues lysine 674–arginine 778, isoleucine 973–leucine 1114, and serine 1152–methionine 1299. Serine 1219 carries the post-translational modification Phosphoserine. Residue threonine 1334 is modified to Phosphothreonine.

In terms of assembly, interacts with CEP250 and CEP68. Interacts with NEK2; the interaction leads to phosphorylation of CNTLN. Post-translationally, phosphorylated directly or indirectly by NEK2.

It is found in the cytoplasm. Its subcellular location is the cytoskeleton. The protein localises to the microtubule organizing center. It localises to the centrosome. The protein resides in the centriole. Its function is as follows. Required for centrosome cohesion and recruitment of CEP68 to centrosomes. The protein is Centlein of Mus musculus (Mouse).